We begin with the raw amino-acid sequence, 100 residues long: Small ribosomal subunit protein uS14 (100 aa).

This sequence belongs to the universal ribosomal protein uS14 family. As to quaternary structure, part of the 30S ribosomal subunit. Contacts proteins S3 and S10.

Binds 16S rRNA, required for the assembly of 30S particles and may also be responsible for determining the conformation of the 16S rRNA at the A site. This is Small ribosomal subunit protein uS14 from Prochlorococcus marinus (strain MIT 9211).